The primary structure comprises 335 residues: Tryptophan--tRNA ligase (335 aa).

ATP is bound by residues 13–15 and 21–22; these read QPS and GN. The 'HIGH' region motif lies at 14 to 22; that stretch reads PSGNLTIGN. D136 contacts L-tryptophan. Residues 148-150, I187, and 196-200 contribute to the ATP site; these read GQD and KMSKS. The 'KMSKS' region motif lies at 196-200; sequence KMSKS.

It belongs to the class-I aminoacyl-tRNA synthetase family. As to quaternary structure, homodimer.

Its subcellular location is the cytoplasm. The catalysed reaction is tRNA(Trp) + L-tryptophan + ATP = L-tryptophyl-tRNA(Trp) + AMP + diphosphate + H(+). Catalyzes the attachment of tryptophan to tRNA(Trp). This chain is Tryptophan--tRNA ligase, found in Buchnera aphidicola subsp. Acyrthosiphon pisum (strain APS) (Acyrthosiphon pisum symbiotic bacterium).